A 623-amino-acid chain; its full sequence is MTRTVDEIKYETPSSWEHKSLDVAEDGRRLAPHSDTARPKGRIRRSMTACHTCRKLKTRCDLDPRGHACRRCLSLRIDCKLPETTDRFQDSAAMWPDATSAIPSIEERLTSLERCMREMTGMMRQMLDHSPGFANASVPHLTKSIITDENASMEGSPSSPFLPKPVRLIQDLQSDFFGEAETSPVDSPLSSDGNAKGAIDSKLSLKLLQTFVDHFGACVSIYNLSDIHNDMKAPDSLLYNTACLLASRYVPGIPTSTVHAIYLQVRHAVVNILWEKPPLKYETLQALALLCLWPATAQKEPPMDSWLLSGISINHAIIALDFLNYAPSEVMVDNETAAQLRLWNTYCLTQLHFAVGNARPFHIQQRYLDHCPRILEHPAATLEDARVVAEIQLYLMTLRLQSNSSRMRLADLDYEEIERWKREWAHLFSGESSTLELSLWFCQTLLHRTAMRLQPRSDRLASEVLQTSRLIISRFLQIRYSTALSLVDQVYFIVGYAALNLCDFNLMDPLIEQVQMFLLHLSPNEDHIAYRFSCMVAEFKRRCGSAECNDPSSTVKGSPLSSYGDSRKMSMGQAPFMPPLMDGMIEGYGFEQLMPEVMPSSFPDGILNGMPVTGLAAYRSATL.

A DNA-binding region (zn(2)-C6 fungal-type) is located at residues 50–79 (CHTCRKLKTRCDLDPRGHACRRCLSLRIDC).

It belongs to the prtT family.

It is found in the nucleus. Transcription factor required for protein utilization and degradation. Regulates transcription of major secreted proteases. The chain is Transcriptional activator of proteases prtT (prtT) from Aspergillus niger (strain ATCC MYA-4892 / CBS 513.88 / FGSC A1513).